Here is a 142-residue protein sequence, read N- to C-terminus: MAKKVIAYIKLQVKAGQASPSPPVGPALGQRGLNIMDFCKAFNAATQKVEQGLPIPVVITAYSDRTFTFITKTPPASILLKKIVGIQSGSKRPNTEKVGKVTRKQLEDIAKTKELDMTAADLDAAVRTIAGSARSMGLVVEG.

It belongs to the universal ribosomal protein uL11 family. As to quaternary structure, part of the ribosomal stalk of the 50S ribosomal subunit. Interacts with L10 and the large rRNA to form the base of the stalk. L10 forms an elongated spine to which L12 dimers bind in a sequential fashion forming a multimeric L10(L12)X complex. In terms of processing, one or more lysine residues are methylated.

Its function is as follows. Forms part of the ribosomal stalk which helps the ribosome interact with GTP-bound translation factors. This chain is Large ribosomal subunit protein uL11, found in Xylella fastidiosa (strain 9a5c).